A 109-amino-acid polypeptide reads, in one-letter code: Nucleoid-associated protein Caul_4574 (109 aa).

This sequence belongs to the YbaB/EbfC family. In terms of assembly, homodimer.

Its subcellular location is the cytoplasm. It localises to the nucleoid. In terms of biological role, binds to DNA and alters its conformation. May be involved in regulation of gene expression, nucleoid organization and DNA protection. The polypeptide is Nucleoid-associated protein Caul_4574 (Caulobacter sp. (strain K31)).